The sequence spans 597 residues: FERM domain-containing protein 3 (597 aa).

An FERM domain is found at 32–312; the sequence is MRCTIRLLDD…ENQAFYKYAK (281 aa). The tract at residues 383–403 is disordered; it reads LLPSPSEQEEELPLGEGVPLP. The chain crosses the membrane as a helical span at residues 531 to 551; sequence LLVVGLGLLLFVFPLLLLLLE.

Ovary-specific.

The protein localises to the membrane. In terms of biological role, putative tumor suppressor gene that may be implicated in the origin and progression of lung cancer. In Homo sapiens (Human), this protein is FERM domain-containing protein 3 (FRMD3).